The chain runs to 434 residues: Chaperone SurA (434 aa).

The first 22 residues, 1–22 (MKHSKKIIFALLALAMSNTSMA), serve as a signal peptide directing secretion. PpiC domains lie at 173 to 274 (DVEF…KVVD) and 283 to 383 (VEEV…QLES).

It is found in the periplasm. It catalyses the reaction [protein]-peptidylproline (omega=180) = [protein]-peptidylproline (omega=0). Its function is as follows. Chaperone involved in the correct folding and assembly of outer membrane proteins. Recognizes specific patterns of aromatic residues and the orientation of their side chains, which are found more frequently in integral outer membrane proteins. May act in both early periplasmic and late outer membrane-associated steps of protein maturation. This is Chaperone SurA from Shewanella frigidimarina (strain NCIMB 400).